Reading from the N-terminus, the 155-residue chain is Isotocin-neurophysin IT 1 (155 aa).

Positions 1–19 (MTGTAISVCLLFLLSVCSA) are cleaved as a signal peptide. A disulfide bond links C20 and C25. A Glycine amide modification is found at G28. 7 disulfide bridges follow: C41/C85, C44/C58, C52/C75, C59/C65, C92/C105, C99/C117, and C106/C111.

It belongs to the vasopressin/oxytocin family. Post-translationally, seven disulfide bonds are present in neurophysin.

In terms of biological role, isotocin causes contraction of smooth muscles. This Takifugu rubripes (Japanese pufferfish) protein is Isotocin-neurophysin IT 1.